A 761-amino-acid polypeptide reads, in one-letter code: Centrosomal protein of 85 kDa (761 aa).

2 disordered regions span residues 1 to 33 (MAMQEKYPNDRSHATSPGSNVIQKGSSLGTEWQ) and 95 to 117 (PSTLGASPAKPNSAPSGPSSAKL). The segment covering 14 to 33 (ATSPGSNVIQKGSSLGTEWQ) has biased composition (polar residues). The residue at position 16 (Ser-16) is a Phosphoserine. Residue Ser-140 is modified to Phosphoserine. Disordered regions lie at residues 226-279 (KAPG…GEQS) and 435-472 (KHSEEGKKQEERVKGRDKHINNLKKKCQKESEQNREKQ). The tract at residues 256-432 (GLSKSLSSQV…QLIRESLKVT (177 aa)) is mediates interaction with NEK2 and is required for its function in the suppression of centrosome disjunction. Coiled coils occupy residues 333-656 (EHLL…RQAQ) and 723-749 (DVIRRKLEEVQQLRHDIEDLRTSLSDR). The interval 433–475 (LQKHSEEGKKQEERVKGRDKHINNLKKKCQKESEQNREKQQRI) is required for centrosome localization and for its function in the suppression of centrosome disjunction. Composition is skewed to basic and acidic residues over residues 435 to 454 (KHSEEGKKQEERVKGRDKHI) and 462 to 472 (QKESEQNREKQ).

It belongs to the CEP85 family. In terms of assembly, homodimer. Interacts with STIL (via N-terminus); this interaction is essential for robust PLK4 activation and efficient centriole assembly and for PLK4-dependent cell migration. Interacts with PLK4; required for CEP85 to be able to drive centriole duplication and cell migration.

Its subcellular location is the cytoplasm. The protein localises to the cytoskeleton. It is found in the microtubule organizing center. It localises to the centrosome. The protein resides in the spindle pole. Its subcellular location is the nucleus. The protein localises to the nucleolus. It is found in the centriole. It localises to the cell cortex. In terms of biological role, acts as a regulator of centriole duplication through a direct interaction with STIL, a key factor involved in the early steps of centriole formation. The CEP85-STIL protein complex acts as a modulator of PLK4-driven cytoskeletal rearrangements and directional cell motility. Acts as a negative regulator of NEK2 to maintain the centrosome integrity in interphase. Suppresses centrosome disjunction by inhibiting NEK2 kinase activity. This Mus musculus (Mouse) protein is Centrosomal protein of 85 kDa (Cep85).